The primary structure comprises 62 residues: Large ribosomal subunit protein bL28 (62 aa).

Belongs to the bacterial ribosomal protein bL28 family.

The protein is Large ribosomal subunit protein bL28 of Streptococcus agalactiae serotype Ia (strain ATCC 27591 / A909 / CDC SS700).